The following is a 113-amino-acid chain: UPF0060 membrane protein Arth_4423 (113 aa).

4 helical membrane passes run 7-27 (VLLF…VWQA), 33-53 (AWWW…VATL), 62-82 (ILAA…MVFD), and 91-111 (VIGS…PRGT).

This sequence belongs to the UPF0060 family.

The protein localises to the cell membrane. The polypeptide is UPF0060 membrane protein Arth_4423 (Arthrobacter sp. (strain FB24)).